A 328-amino-acid polypeptide reads, in one-letter code: MAKIYRETDADLSELKGKVIAVLGYGIQGRSWALNMRDSGLRVIVGVRPGKSRDLAKEEGFETYDVAEATKMADVVAVLLPDMVQPKVWTSEIGPNLKPGALVIFAHGFNIRYNLIKPPSNIDVTLVAPKAPGKAVRDEYLRGWGVPALVAVHQDYTGKALRRALAVAKANGFTRVGVIETTFAEETETDLIGEQTVLVGGLMELIKKGFETMIELGYQPEVAYFEVLNEAKLIMDLIWERGVYGMLNGVSETARYGGLTVGPYVLDNSVKERMRKAAERVRNGEFAREWLNEYEGGMKNLSRMLNEVKNHRLEVVGEDLRRLMRSGR.

The KARI N-terminal Rossmann domain maps to 2 to 181 (AKIYRETDAD…GFTRVGVIET (180 aa)). Residues 25–28 (YGIQ), arginine 48, serine 52, and 82–85 (DMVQ) contribute to the NADP(+) site. Residue histidine 107 is part of the active site. Glycine 133 contacts NADP(+). In terms of domain architecture, KARI C-terminal knotted spans 182 to 327 (TFAEETETDL…EDLRRLMRSG (146 aa)). Mg(2+) is bound by residues aspartate 190, glutamate 194, glutamate 226, and glutamate 230. Residue serine 251 participates in substrate binding.

It belongs to the ketol-acid reductoisomerase family. Mg(2+) is required as a cofactor.

The enzyme catalyses (2R)-2,3-dihydroxy-3-methylbutanoate + NADP(+) = (2S)-2-acetolactate + NADPH + H(+). It catalyses the reaction (2R,3R)-2,3-dihydroxy-3-methylpentanoate + NADP(+) = (S)-2-ethyl-2-hydroxy-3-oxobutanoate + NADPH + H(+). Its pathway is amino-acid biosynthesis; L-isoleucine biosynthesis; L-isoleucine from 2-oxobutanoate: step 2/4. It functions in the pathway amino-acid biosynthesis; L-valine biosynthesis; L-valine from pyruvate: step 2/4. In terms of biological role, involved in the biosynthesis of branched-chain amino acids (BCAA). Catalyzes an alkyl-migration followed by a ketol-acid reduction of (S)-2-acetolactate (S2AL) to yield (R)-2,3-dihydroxy-isovalerate. In the isomerase reaction, S2AL is rearranged via a Mg-dependent methyl migration to produce 3-hydroxy-3-methyl-2-ketobutyrate (HMKB). In the reductase reaction, this 2-ketoacid undergoes a metal-dependent reduction by NADPH to yield (R)-2,3-dihydroxy-isovalerate. In Caldivirga maquilingensis (strain ATCC 700844 / DSM 13496 / JCM 10307 / IC-167), this protein is Ketol-acid reductoisomerase (NADP(+)).